A 502-amino-acid polypeptide reads, in one-letter code: Na(+)/H(+) antiporter NhaB (502 aa).

The next 11 helical transmembrane spans lie at 27 to 49 (AFLV…VLIL), 66 to 86 (PGGL…ESVF), 95 to 115 (VILL…LLLY), 128 to 148 (IVLS…LDAL), 149 to 169 (TVTA…HQFA), 241 to 261 (FFLQ…VTCI), 299 to 318 (IAAL…SLAL), 350 to 370 (FEEA…VAVI), 394 to 414 (MFFI…VATV), 450 to 470 (ATPN…APLI), and 477 to 497 (MVLM…IAVY).

Belongs to the NhaB Na(+)/H(+) (TC 2.A.34) antiporter family.

It localises to the cell inner membrane. The catalysed reaction is 2 Na(+)(in) + 3 H(+)(out) = 2 Na(+)(out) + 3 H(+)(in). Na(+)/H(+) antiporter that extrudes sodium in exchange for external protons. In Teredinibacter turnerae (strain ATCC 39867 / T7901), this protein is Na(+)/H(+) antiporter NhaB.